We begin with the raw amino-acid sequence, 860 residues long: Leucine--tRNA ligase (860 aa).

Positions 42 to 52 match the 'HIGH' region motif; sequence PYPSGRLHMGH. Positions 619-623 match the 'KMSKS' region motif; it reads KMSKS. An ATP-binding site is contributed by lysine 622.

Belongs to the class-I aminoacyl-tRNA synthetase family.

The protein resides in the cytoplasm. The catalysed reaction is tRNA(Leu) + L-leucine + ATP = L-leucyl-tRNA(Leu) + AMP + diphosphate. The sequence is that of Leucine--tRNA ligase from Salmonella choleraesuis (strain SC-B67).